The sequence spans 953 residues: Ribonuclease E (953 aa).

Disordered regions lie at residues 1–23 and 118–314; these read MIDG…PDRL and VAPQ…RRRP. Residues 14–23 are compositionally biased toward basic and acidic residues; the sequence is SQHEELPDRL. Residues 127–150 show a composition bias toward acidic residues; it reads LADDEDVDDGPDYVADDSDADDEG. Over residues 157 to 169 the composition is skewed to basic residues; the sequence is NRRRRRGRRGRGR. The span at 183 to 193 shows a compositional bias: polar residues; that stretch reads DQQSEPRAQQF. The segment covering 199–223 has biased composition (acidic residues); the sequence is AETDDGDDRDSEDTEAGDNGEDENG. Basic residues predominate over residues 230–240; that stretch reads RRRRRRRRRKS. Composition is skewed to basic and acidic residues over residues 263-272 and 294-311; these read VHERVPRAGD and TRLE…DAGR. Residues 376-453 enclose the S1 motif domain; it reads GNIYLGIVQN…GHKGARLTTQ (78 aa). 2 residues coordinate Mg(2+): Asp-647 and Asp-691. 2 residues coordinate Zn(2+): Cys-749 and Cys-752. 2 disordered regions span residues 766–808 and 822–953; these read SAAA…APGE and LAGR…IRLD. Positions 848–915 are enriched in acidic residues; that stretch reads DLDDTAQADF…DADVDEEDAA (68 aa).

Belongs to the RNase E/G family. In terms of assembly, assembles into a homotetramer formed by a dimer of dimers. Interacts with DNA-binding protein HU (hupB). Mg(2+) serves as cofactor. Zn(2+) is required as a cofactor.

It is found in the cytoplasm. The catalysed reaction is Endonucleolytic cleavage of single-stranded RNA in A- and U-rich regions.. Its function is as follows. Endoribonuclease that plays a central role in RNA processing and decay. Plays a major role in pre-16S rRNA maturation, probably generating the mature 5'-end, and a minor role in pre-5S and pre-23S rRNA maturation. Probably also processes tRNA. RNase E and HupB jointly contribute to cellular adaptation to changing growth conditions and survival during antibiotic treatment and in the host. This Mycobacterium tuberculosis (strain ATCC 25618 / H37Rv) protein is Ribonuclease E.